The sequence spans 350 residues: 5'-tyrosyl-DNA phosphodiesterase (350 aa).

Residues 113–117 are interaction with 5' end of substrate DNA; sequence NIDGL. Mg(2+) contacts are provided by Asp115 and Glu145. The tract at residues 219–224 is interaction with 5' end of substrate DNA; that stretch reads HLESMR. Catalysis depends on Asp258, which acts as the Proton donor/acceptor. Residues 260-262 form an interaction with 5' end of substrate DNA region; sequence NLR.

The protein belongs to the CCR4/nocturin family. TTRAP/TDP2 subfamily. Requires Mg(2+) as cofactor. Mn(2+) is required as a cofactor.

The protein resides in the nucleus. Its subcellular location is the PML body. DNA repair enzyme that can remove a variety of covalent adducts from DNA through hydrolysis of a 5'-phosphodiester bond, giving rise to DNA with a free 5' phosphate. Catalyzes the hydrolysis of dead-end complexes between DNA and the topoisomerase 2 (top2) active site tyrosine residue. Hydrolyzes 5'-phosphoglycolates on protruding 5' ends on DNA double-strand breaks (DSBs) due to DNA damage by radiation and free radicals. This chain is 5'-tyrosyl-DNA phosphodiesterase, found in Caenorhabditis briggsae.